Consider the following 1067-residue polypeptide: Carbamoyl phosphate synthase large chain (1067 aa).

Residues methionine 1–glutamate 401 are carboxyphosphate synthetic domain. ATP-binding residues include arginine 129, arginine 169, glycine 175, glycine 176, lysine 208, valine 210, glutamate 215, glycine 241, isoleucine 242, histidine 243, glutamine 284, and glutamate 298. Positions arginine 133–leucine 327 constitute an ATP-grasp 1 domain. Positions 284, 298, and 300 each coordinate Mg(2+). Residues glutamine 284, glutamate 298, and asparagine 300 each coordinate Mn(2+). Residues isoleucine 402–valine 549 are oligomerization domain. The segment at valine 550–serine 932 is carbamoyl phosphate synthetic domain. Positions aspartate 674–leucine 864 constitute an ATP-grasp 2 domain. ATP contacts are provided by arginine 710, lysine 749, leucine 751, glutamate 755, glycine 780, valine 781, histidine 782, serine 783, glutamine 823, and glutamate 835. Mg(2+) contacts are provided by glutamine 823, glutamate 835, and asparagine 837. Mn(2+) contacts are provided by glutamine 823, glutamate 835, and asparagine 837. Residues methionine 933–isoleucine 1067 form the MGS-like domain. An allosteric domain region spans residues methionine 933–isoleucine 1067.

The protein belongs to the CarB family. As to quaternary structure, composed of two chains; the small (or glutamine) chain promotes the hydrolysis of glutamine to ammonia, which is used by the large (or ammonia) chain to synthesize carbamoyl phosphate. Tetramer of heterodimers (alpha,beta)4. The cofactor is Mg(2+). Requires Mn(2+) as cofactor.

The catalysed reaction is hydrogencarbonate + L-glutamine + 2 ATP + H2O = carbamoyl phosphate + L-glutamate + 2 ADP + phosphate + 2 H(+). It catalyses the reaction hydrogencarbonate + NH4(+) + 2 ATP = carbamoyl phosphate + 2 ADP + phosphate + 2 H(+). The protein operates within amino-acid biosynthesis; L-arginine biosynthesis; carbamoyl phosphate from bicarbonate: step 1/1. Its pathway is pyrimidine metabolism; UMP biosynthesis via de novo pathway; (S)-dihydroorotate from bicarbonate: step 1/3. Functionally, large subunit of the glutamine-dependent carbamoyl phosphate synthetase (CPSase). CPSase catalyzes the formation of carbamoyl phosphate from the ammonia moiety of glutamine, carbonate, and phosphate donated by ATP, constituting the first step of 2 biosynthetic pathways, one leading to arginine and/or urea and the other to pyrimidine nucleotides. The large subunit (synthetase) binds the substrates ammonia (free or transferred from glutamine from the small subunit), hydrogencarbonate and ATP and carries out an ATP-coupled ligase reaction, activating hydrogencarbonate by forming carboxy phosphate which reacts with ammonia to form carbamoyl phosphate. In Clostridium perfringens (strain SM101 / Type A), this protein is Carbamoyl phosphate synthase large chain.